We begin with the raw amino-acid sequence, 191 residues long: Protein YceI (191 aa).

The first 22 residues, 1–22 (MKKSLLGLTFASLMFSAGSAVA), serve as a signal peptide directing secretion.

Belongs to the UPF0312 family. Type 1 subfamily.

It is found in the periplasm. This chain is Protein YceI, found in Shigella flexneri.